We begin with the raw amino-acid sequence, 489 residues long: Ribulose bisphosphate carboxylase large chain (489 aa).

Residues N128 and T178 each coordinate substrate. K180 serves as the catalytic Proton acceptor. Residue K182 participates in substrate binding. 3 residues coordinate Mg(2+): K206, D208, and E209. K206 bears the N6-carboxylysine mark. The Proton acceptor role is filled by H298. Residues R299, H331, and S383 each coordinate substrate.

Belongs to the RuBisCO large chain family. Type I subfamily. In terms of assembly, heterohexadecamer of 8 large chains and 8 small chains. The cofactor is Mg(2+).

It catalyses the reaction 2 (2R)-3-phosphoglycerate + 2 H(+) = D-ribulose 1,5-bisphosphate + CO2 + H2O. The catalysed reaction is D-ribulose 1,5-bisphosphate + O2 = 2-phosphoglycolate + (2R)-3-phosphoglycerate + 2 H(+). Functionally, ruBisCO catalyzes two reactions: the carboxylation of D-ribulose 1,5-bisphosphate, the primary event in carbon dioxide fixation, as well as the oxidative fragmentation of the pentose substrate. Both reactions occur simultaneously and in competition at the same active site. This chain is Ribulose bisphosphate carboxylase large chain, found in Nitrosospira sp. (strain 40KI).